The following is a 117-amino-acid chain: Cysteine rich necrotrophic effector Tox1 (117 aa).

The N-terminal stretch at Met1 to Ala17 is a signal peptide. 8 cysteine pairs are disulfide-bonded: Cys36–Cys87, Cys44–Cys55, Cys53–Cys58, Cys54–Cys98, Cys63–Cys83, Cys67–Cys117, Cys86–Cys97, and Cys107–Cys110. The tract at residues Cys87–Cys117 is chitin-binding domain.

In terms of assembly, interacts with host cell wall-associated kinase receptor Snn1.

The protein localises to the secreted. Necrotrophic effector that plays a critical role during fungal penetration, via its interaction with the host Snn1 protein. Snn1 is a member of the wall-associated kinase class of receptors, which are known to drive pathways for biotrophic pathogen resistance. Recognition of Tox1 by Snn1 induces mitogen-activated protein kinase genes such as MAPK3 and activates programmed cell death, which allows this necrotroph to gain nutrients and sporulate. Recognition of Tox1 by Snn1 also induces other plant defense responses, including oxidative burst and pathogenesis related (PR) gene expression. The development of necrosis and disease induced by Tox1, and particularly penetration during infection, requires light, which is probably related to the light-dependent expression of host Snn1. Tox1 plays an additional role in providing significant protection from wheat chitinases by binding chitin in the fungal cell wall. This chain is Cysteine rich necrotrophic effector Tox1, found in Phaeosphaeria nodorum (strain SN15 / ATCC MYA-4574 / FGSC 10173) (Glume blotch fungus).